The primary structure comprises 39 residues: Natriuretic peptide TcNPa (39 aa).

Residues Ser1–Ile8 constitute a propeptide that is removed on maturation. Cys12 and Cys28 form a disulfide bridge. Thr35 carries an O-linked (GalNAc...) threonine glycan.

It belongs to the natriuretic peptide family. Post-translationally, O-linked glycans consist of galactosyl-beta(1-3)-N-acetylgalactosamine (Gal-GalNAc). The synthetic non-glycosylated form shows higher potency on natriuretic receptors (EC(50)=672.90 nM) and NPR2 (EC(50)=261.0 nM). As to expression, expressed by the venom gland.

It localises to the secreted. Its function is as follows. Snake venom natriuretic peptide that targets both NPR1 (EC(50)=1080.0 nM) and NPR2 (EC(50)=328.60 nM). Exhibits hypotensive and vasodepressor activities. In Tropidechis carinatus (Australian rough-scaled snake), this protein is Natriuretic peptide TcNPa.